The sequence spans 479 residues: Wax ester synthase/diacylglycerol acyltransferase 2 (479 aa).

Residues Met-1–Asn-182 are Cytoplasmic-facing. His-144 serves as the catalytic Proton acceptor. A helical transmembrane segment spans residues Val-183 to Phe-199. Residues His-200–Val-479 are Lumenal-facing. A glycan (N-linked (GlcNAc...) asparagine) is linked at Asn-253.

This sequence in the N-terminal section; belongs to the long-chain O-acyltransferase family. Mostly expressed in flowers and siliques and barely in roots and stems.

The protein localises to the cell membrane. The protein resides in the endoplasmic reticulum membrane. It carries out the reaction an acyl-CoA + a 1,2-diacyl-sn-glycerol = a triacyl-sn-glycerol + CoA. The enzyme catalyses a long chain fatty alcohol + a fatty acyl-CoA = a wax ester + CoA. It participates in glycerolipid metabolism; triacylglycerol biosynthesis. It functions in the pathway lipid metabolism. Functionally, bifunctional wax ester synthase/diacylglycerol acyltransferase. Involved in cuticular wax biosynthesis. The sequence is that of Wax ester synthase/diacylglycerol acyltransferase 2 from Arabidopsis thaliana (Mouse-ear cress).